The chain runs to 188 residues: Putative ankyrin repeat protein FPV230 (188 aa).

ANK repeat units lie at residues 2-31 (ENEL…NPNA), 36-65 (KYMI…DANV), 135-164 (LGST…DINI), and 168-187 (NNNT…YLKC).

The chain is Putative ankyrin repeat protein FPV230 from Vertebrata (FPV).